Reading from the N-terminus, the 307-residue chain is Ribosomal RNA small subunit methyltransferase H (307 aa).

Residues 33–35 (GGY), D51, F78, D96, and Q103 each bind S-adenosyl-L-methionine.

The protein belongs to the methyltransferase superfamily. RsmH family.

The protein resides in the cytoplasm. It carries out the reaction cytidine(1402) in 16S rRNA + S-adenosyl-L-methionine = N(4)-methylcytidine(1402) in 16S rRNA + S-adenosyl-L-homocysteine + H(+). Its function is as follows. Specifically methylates the N4 position of cytidine in position 1402 (C1402) of 16S rRNA. The sequence is that of Ribosomal RNA small subunit methyltransferase H from Rickettsia conorii (strain ATCC VR-613 / Malish 7).